The sequence spans 319 residues: MATRGTVTDFPGFDGRADAEVLRKAMKGLGTDEDSILNLLTSRSNAQRQEIAQEFKTLFGRDLVDDLKSELTGKFEKLIVAMMKPSRLYDAYELKHALKGAGTDEKVLTEIIASRTPEELSAIKQVYEEEYGSNLEDDVVGDTSGYYQRMLVVLLQANRDPDTAIDDAQVELDAQALFQAGELKWGTDEEKFITIFGTRSVSHLRRVFDKYMTISGFQIEETIDRETSGNLEQLLLAVVKSIRSIPAYLAETLYYAMKGAGTDDHTLIRVVVSRSEIDLFNIRKEFRKNFATSLYSMIKGDTSGDYKKALLLLCGGEDD.

N-acetylalanine is present on Ala-2. 4 Annexin repeats span residues 13-84 (FDGR…AMMK), 85-156 (PSRL…VLLQ), 168-240 (AQVE…AVVK), and 244-315 (SIPA…LLCG). Residue Lys-27 forms a Glycyl lysine isopeptide (Lys-Gly) (interchain with G-Cter in SUMO1); alternate linkage. Lys-27 participates in a covalent cross-link: Glycyl lysine isopeptide (Lys-Gly) (interchain with G-Cter in SUMO2); alternate. Ser-35 is subject to Phosphoserine. Lys-68, Lys-74, Lys-77, Lys-95, and Lys-99 each carry N6-acetyllysine. The residue at position 288 (Lys-288) is an N6-succinyllysine. The [IL]-x-C-x-x-[DE] motif signature appears at 312-318 (LLCGGED).

The protein belongs to the annexin family. In terms of assembly, monomer. Binds ATRX and EIF5B. In terms of processing, S-nitrosylation is induced by interferon-gamma and oxidatively-modified low-densitity lipoprotein (LDL(ox)) possibly implicating the iNOS-S100A8/9 transnitrosylase complex.

In terms of biological role, this protein is an anticoagulant protein that acts as an indirect inhibitor of the thromboplastin-specific complex, which is involved in the blood coagulation cascade. This is Annexin A5 (Anxa5) from Mus musculus (Mouse).